The primary structure comprises 94 residues: MSRSIKKGPFADASLLKKVDAQADADKKQVIKTWSRRSTIFPSFVGLTIAVYDGRKHVPVYITEDMVGHKLGEFVPTRTFHGHKSTDDKATSQS.

The protein belongs to the universal ribosomal protein uS19 family.

In terms of biological role, protein S19 forms a complex with S13 that binds strongly to the 16S ribosomal RNA. The protein is Small ribosomal subunit protein uS19 (rpsS) of Lactobacillus acidophilus (strain ATCC 700396 / NCK56 / N2 / NCFM).